The chain runs to 180 residues: Small ribosomal subunit protein uS5 (180 aa).

A disordered region spans residues 1–20 (MAKMQGRMQGKVAPGDDRGD). In terms of domain architecture, S5 DRBM spans 22 to 85 (LKEKMVAINR…DEARRKMIKV (64 aa)).

Belongs to the universal ribosomal protein uS5 family. As to quaternary structure, part of the 30S ribosomal subunit. Contacts proteins S4 and S8.

With S4 and S12 plays an important role in translational accuracy. Its function is as follows. Located at the back of the 30S subunit body where it stabilizes the conformation of the head with respect to the body. In Nitrosospira multiformis (strain ATCC 25196 / NCIMB 11849 / C 71), this protein is Small ribosomal subunit protein uS5.